The chain runs to 307 residues: MKLWFSTLKLKKAAAVLLFSCVALAGCANNQTNASQPAEKNEKTEMKDDFAKLEEQFDAKLGIFALDTGTNRTVAYRPDERFAFASTIKALTVGVLLQQKSIEDLNQRITYTRDDLVNYNPITEKHVDTGMTLKELADASLRYSDNAAQNLILKQIGGPESLKKELRKIGDEVTNPERFEPELNEVNPGETQDTSTARALVTSLRAFALEDKLPSEKRELLIDWMKRNTTGDALIRAGVPDGWEVADKTGAASYGTRNDIAIIWPPKGDPVVLAVLSSRDKKDAKYDDKLIAEATKVVMKALNMNGK.

An N-terminal signal peptide occupies residues methionine 1 to glycine 26. Residue cysteine 27 is the site of N-palmitoyl cysteine attachment. The S-diacylglycerol cysteine moiety is linked to residue cysteine 27. Catalysis depends on serine 86, which acts as the Acyl-ester intermediate. The active-site Proton acceptor is glutamate 182. A substrate-binding site is contributed by lysine 248–glycine 250.

It belongs to the class-A beta-lactamase family. Post-translationally, large exopenicillinase is the primary secretion product; it can be converted to small exopenicillinase.

The protein localises to the cell membrane. It catalyses the reaction a beta-lactam + H2O = a substituted beta-amino acid. In Bacillus licheniformis, this protein is Beta-lactamase (penP).